The primary structure comprises 396 residues: Elongation factor Tu (396 aa).

Positions 10-205 constitute a tr-type G domain; the sequence is KPHVNIGTIG…AVDESIPDPV (196 aa). Residues 19–26 are G1; that stretch reads GHVDHGKT. 19 to 26 lines the GTP pocket; sequence GHVDHGKT. Thr26 contributes to the Mg(2+) binding site. Residues 62–66 form a G2 region; that stretch reads GITIN. The G3 stretch occupies residues 83–86; the sequence is DAPG. Residues 83–87 and 138–141 contribute to the GTP site; these read DAPGH and NKAD. The G4 stretch occupies residues 138–141; that stretch reads NKAD. The interval 175 to 177 is G5; sequence SAL.

The protein belongs to the TRAFAC class translation factor GTPase superfamily. Classic translation factor GTPase family. EF-Tu/EF-1A subfamily. Monomer.

The protein resides in the cytoplasm. It carries out the reaction GTP + H2O = GDP + phosphate + H(+). Functionally, GTP hydrolase that promotes the GTP-dependent binding of aminoacyl-tRNA to the A-site of ribosomes during protein biosynthesis. The protein is Elongation factor Tu of Mycolicibacterium gilvum (strain PYR-GCK) (Mycobacterium gilvum (strain PYR-GCK)).